Consider the following 1039-residue polypeptide: Error-prone DNA polymerase (1039 aa).

It belongs to the DNA polymerase type-C family. DnaE2 subfamily.

It localises to the cytoplasm. It catalyses the reaction DNA(n) + a 2'-deoxyribonucleoside 5'-triphosphate = DNA(n+1) + diphosphate. Its function is as follows. DNA polymerase involved in damage-induced mutagenesis and translesion synthesis (TLS). It is not the major replicative DNA polymerase. This Idiomarina loihiensis (strain ATCC BAA-735 / DSM 15497 / L2-TR) protein is Error-prone DNA polymerase.